The sequence spans 433 residues: Myricetin 3-O-glucosyl 1,2-rhamnoside 6'-O-caffeoyltransferase AT2 (433 aa).

Residues H157 and D375 each act as proton acceptor in the active site.

It belongs to the plant acyltransferase family. In terms of tissue distribution, expressed in young cromes.

The catalysed reaction is myricetin 3-O-[beta-D-glucosyl-(1-&gt;2)-alpha-L-rhamnoside] + (E)-caffeoyl-CoA = myricetin 3-O-[(6-O-(E)-caffeoyl-beta-D-glucosyl)-(1-&gt;2)-alpha-L-rhamnoside] + CoA. It participates in flavonoid metabolism. In terms of biological role, caffeoyltransferase involved in montbretin A (MbA) biosynthesis. Catalyzes the caffeoylation of myricetin 3-O-beta-D-glucosyl 1,2-alpha-L-rhamnoside (MRG) to produce myricetin 3-O-(6'-O-caffeoyl)-beta-D-glucosyl 1,2-alpha-L-rhamnoside (mini-MbA), a precursor of MbA. Mini-MbA and MbA are potent inhibitors of human pancreatic alpha-amylase and are being developed as drug candidates to treat type-2 diabetes. In vitro, is able to catalyze the caffeoylation of quercetin 3-O-sophoroside (QGG), although QGG may not be a physiological substrate in vivo. In vitro, can use coumaryl-CoA, feruloyl-CoA and acetyl-CoA, although these three acyl donors may not be physiological in vivo. The sequence is that of Myricetin 3-O-glucosyl 1,2-rhamnoside 6'-O-caffeoyltransferase AT2 from Crocosmia x crocosmiiflora (Montbretia).